Here is a 941-residue protein sequence, read N- to C-terminus: DNA mismatch repair protein MutS (941 aa).

Position 613–620 (613–620 (GPNMAGKS)) interacts with ATP.

This sequence belongs to the DNA mismatch repair MutS family.

Functionally, this protein is involved in the repair of mismatches in DNA. It is possible that it carries out the mismatch recognition step. This protein has a weak ATPase activity. The sequence is that of DNA mismatch repair protein MutS from Clostridium botulinum (strain Alaska E43 / Type E3).